The chain runs to 528 residues: Zinc finger protein 16-like (528 aa).

The segment at 1–28 (MSRKRNHCYMETGASSESQGAFVDSAGP) is disordered. Residues 79 to 106 (IRVLKMELREKSDEIELLKAKLESAEKD) are a coiled coil. Disordered regions lie at residues 159-202 (GAAE…TDAE) and 232-293 (FKGD…DRME). Basic and acidic residues predominate over residues 232–242 (FKGDSETKCED). Acidic residues predominate over residues 244-256 (PPMDEEDENEDSE). Basic and acidic residues-rich tracts occupy residues 257–270 (EGRG…DHFP) and 278–293 (GEDR…DRME). Residues 303 to 326 (FICPFCGTLCPDSSFLEEHIKLMH) form a C2H2-type 1 zinc finger. The segment covering 333–345 (QSTSAGSSSQAEG) has biased composition (low complexity). The disordered stretch occupies residues 333–359 (QSTSAGSSSQAEGDSGEAGPASRGARE). C2H2-type zinc fingers lie at residues 366-388 (YECG…QRIH), 394-416 (FVCP…RLSH), 423-445 (FPCP…QRVH), and 451-473 (YACP…MRIH). A C2H2-type 6; degenerate zinc finger spans residues 479–501 (YTCYQCGRSFRHLGTYKSHRCMP). The interval 502 to 528 (ATQMPSEHSPPWAQEDKVQTGRLQGYV) is disordered.

The protein belongs to the krueppel C2H2-type zinc-finger protein family.

It is found in the nucleus. Its function is as follows. Probable transcription factor. Important for development and migration of oligodendrocyte precursor cells, and normal myelination of axons in the central nervous system (CNS). Functions autonomously in oligodendrocytes to promote CNS myelination. Seems to act in parallel with notch3 during oligodendrocyte development. The sequence is that of Zinc finger protein 16-like from Danio rerio (Zebrafish).